Reading from the N-terminus, the 407-residue chain is Ameloblastin (407 aa).

An N-terminal signal peptide occupies residues 1–26 (MSASKIPLFKMKGLILFLSLVKMSLA). Proline 42 carries the post-translational modification Hydroxyproline. The residue at position 48 (serine 48) is a Phosphoserine. 2 disordered regions span residues 124 to 143 (GVQV…PGQL) and 259 to 304 (QNSP…ENPA).

Belongs to the ameloblastin family. As to expression, ameloblast-specific.

The protein resides in the secreted. Its subcellular location is the extracellular space. It localises to the extracellular matrix. Functionally, involved in the mineralization and structural organization of enamel. The chain is Ameloblastin (Ambn) from Mus musculus (Mouse).